A 354-amino-acid polypeptide reads, in one-letter code: Cellular communication network factor 6 (354 aa).

A signal peptide spans 1–23 (MRRLLFCTLLMTGLTQLCCRTQG). Positions 44–117 (RTEVCRWPCR…RYETGVCAYL (74 aa)) constitute an IGFBP N-terminal domain. Intrachain disulfides connect cysteine 48/cysteine 72, cysteine 52/cysteine 74, cysteine 54/cysteine 75, cysteine 61/cysteine 78, cysteine 86/cysteine 100, cysteine 92/cysteine 114, cysteine 209/cysteine 238, cysteine 219/cysteine 223, cysteine 247/cysteine 252, cysteine 268/cysteine 305, cysteine 285/cysteine 319, cysteine 296/cysteine 335, and cysteine 299/cysteine 337. The 46-residue stretch at 208–253 (KCLVQATKWTPCSRTCGMGISNRVTNDNANCEMRKERRLCYIQPCS) folds into the TSP type-1 domain. A CTCK domain is found at 268-342 (CQPTFQLPKA…TSCVCQRDCR (75 aa)). N-linked (GlcNAc...) asparagine glycosylation occurs at asparagine 308.

This sequence belongs to the CCN family.

It is found in the secreted. Its subcellular location is the mitochondrion. Plays a role in mitochondrial electron transport and mitochondrial respiration. This Mus musculus (Mouse) protein is Cellular communication network factor 6.